The chain runs to 318 residues: 26 kDa endochitinase 1 (318 aa).

The N-terminal stretch at 1–19 (MRAFVLFAVVAMAATMAVA) is a signal peptide. The Chitin-binding type-1 domain maps to 20 to 59 (EQCGSQAGGATCPNCLCCSRFGWCGSTPYCGDGCQSQCSG). Intrachain disulfides connect Cys-22–Cys-37, Cys-31–Cys-43, Cys-36–Cys-49, Cys-53–Cys-57, Cys-98–Cys-160, Cys-172–Cys-180, and Cys-279–Cys-311. Catalysis depends on Glu-142, which acts as the Proton donor.

This sequence belongs to the glycosyl hydrolase 19 family. Chitinase class I subfamily.

It carries out the reaction Random endo-hydrolysis of N-acetyl-beta-D-glucosaminide (1-&gt;4)-beta-linkages in chitin and chitodextrins.. Functionally, defense against chitin-containing fungal pathogens. This is 26 kDa endochitinase 1 from Hordeum vulgare (Barley).